The primary structure comprises 887 residues: Multiple RNA-binding domain-containing protein 1 (887 aa).

The region spanning 2 to 94 (SRIIVKGLPV…SKIEVSMAKS (93 aa)) is the RRM 1 domain. Disordered stretches follow at residues 121-143 (KLLQEENRKKKKVDENKHSNIDD), 203-276 (KEEN…RNLA), and 297-336 (SEAETREKSSSYATEQNESLDTKKEEQPERAVPQKTDEEL). A phosphoserine mark is found at S220 and S264. Basic and acidic residues predominate over residues 264–276 (SDEKENEKRRNLA). Over residues 306–315 (SSYATEQNES) the composition is skewed to polar residues. Residues 316 to 325 (LDTKKEEQPE) show a composition bias toward basic and acidic residues. 4 consecutive RRM domains span residues 345-423 (GRLF…PGEE), 532-604 (KVIL…RGPK), 663-746 (VSIF…LSHR), and 763-840 (GKII…YAEE). The segment at 864 to 887 (EMAALRNGGGRKKLDVDDEENEGF) is disordered.

The protein belongs to the RRM MRD1 family. As to quaternary structure, interacts with NOP1. Binds to the 35S pre-rRNA and the U3 snoRNA.

It localises to the nucleus. In terms of biological role, involved in pre-rRNA processing. Required for maintaining steady-state levels of 40S ribosomal subunit. Required for the initial processing of pre-rRNA at the A0 to A2 sites, leading to the processing of the 23S pre-rRNA intermediate to the 18S rRNA. The chain is Multiple RNA-binding domain-containing protein 1 (MRD1) from Saccharomyces cerevisiae (strain ATCC 204508 / S288c) (Baker's yeast).